The sequence spans 44 residues: Non-structural protein 7b (44 aa).

Residues Phe9–Trp29 form a helical membrane-spanning segment.

The protein localises to the host membrane. In Bat coronavirus Rp3/2004 (BtCoV/Rp3/2004), this protein is Non-structural protein 7b.